The following is a 617-amino-acid chain: Glutamyl-tRNA(Gln) amidotransferase subunit E (617 aa).

Belongs to the GatB/GatE family. GatE subfamily. As to quaternary structure, heterodimer of GatD and GatE.

The enzyme catalyses L-glutamyl-tRNA(Gln) + L-glutamine + ATP + H2O = L-glutaminyl-tRNA(Gln) + L-glutamate + ADP + phosphate + H(+). Functionally, allows the formation of correctly charged Gln-tRNA(Gln) through the transamidation of misacylated Glu-tRNA(Gln) in organisms which lack glutaminyl-tRNA synthetase. The reaction takes place in the presence of glutamine and ATP through an activated gamma-phospho-Glu-tRNA(Gln). The GatDE system is specific for glutamate and does not act on aspartate. This is Glutamyl-tRNA(Gln) amidotransferase subunit E from Natronomonas pharaonis (strain ATCC 35678 / DSM 2160 / CIP 103997 / JCM 8858 / NBRC 14720 / NCIMB 2260 / Gabara) (Halobacterium pharaonis).